The primary structure comprises 171 residues: Large ribosomal subunit protein bL21 (171 aa).

Positions 144–171 are disordered; that stretch reads AAPAKAEAAPKKKAAPKKAAAKTEEGEA. Residues 154–163 are compositionally biased toward basic residues; sequence KKKAAPKKAA.

It belongs to the bacterial ribosomal protein bL21 family. In terms of assembly, part of the 50S ribosomal subunit. Contacts protein L20.

In terms of biological role, this protein binds to 23S rRNA in the presence of protein L20. The polypeptide is Large ribosomal subunit protein bL21 (Caulobacter vibrioides (strain ATCC 19089 / CIP 103742 / CB 15) (Caulobacter crescentus)).